Here is a 169-residue protein sequence, read N- to C-terminus: uncharacterized protein (169 aa).

The chain crosses the membrane as a helical span at residues 97 to 117; that stretch reads IVIFCILVIVAFVIWLVVWLF. The segment at 137–169 is disordered; it reads NYSGLPTPQPTPTHYPAEQYSYDPARDRDNYRY. Positions 160-169 are enriched in basic and acidic residues; that stretch reads PARDRDNYRY.

The protein resides in the membrane. This is an uncharacterized protein from Caenorhabditis elegans.